A 23-amino-acid chain; its full sequence is Phospholipase A2 crotoxin basic chain 3 (23 aa).

The cofactor is Ca(2+). In terms of processing, contains 7 disulfide bonds. As to expression, expressed by the venom gland.

Its subcellular location is the secreted. The catalysed reaction is a 1,2-diacyl-sn-glycero-3-phosphocholine + H2O = a 1-acyl-sn-glycero-3-phosphocholine + a fatty acid + H(+). In terms of biological role, snake venom phospholipase A2 (PLA2) that shows presynaptic neurotoxicity. PLA2 catalyzes the calcium-dependent hydrolysis of the 2-acyl groups in 3-sn-phosphoglycerides. The protein is Phospholipase A2 crotoxin basic chain 3 of Crotalus durissus terrificus (South American rattlesnake).